We begin with the raw amino-acid sequence, 397 residues long: 1-deoxy-D-xylulose 5-phosphate reductoisomerase (397 aa).

7 residues coordinate NADPH: threonine 10, glycine 11, serine 12, isoleucine 13, glycine 36, asparagine 38, and asparagine 124. Lysine 125 is a 1-deoxy-D-xylulose 5-phosphate binding site. Glutamate 126 contributes to the NADPH binding site. A Mn(2+)-binding site is contributed by aspartate 150. Residues serine 151, glutamate 152, serine 186, and histidine 209 each contribute to the 1-deoxy-D-xylulose 5-phosphate site. A Mn(2+)-binding site is contributed by glutamate 152. Glycine 215 provides a ligand contact to NADPH. Positions 222, 227, 228, and 231 each coordinate 1-deoxy-D-xylulose 5-phosphate. Glutamate 231 contacts Mn(2+).

It belongs to the DXR family. Mg(2+) serves as cofactor. Mn(2+) is required as a cofactor.

It carries out the reaction 2-C-methyl-D-erythritol 4-phosphate + NADP(+) = 1-deoxy-D-xylulose 5-phosphate + NADPH + H(+). Its pathway is isoprenoid biosynthesis; isopentenyl diphosphate biosynthesis via DXP pathway; isopentenyl diphosphate from 1-deoxy-D-xylulose 5-phosphate: step 1/6. Its function is as follows. Catalyzes the NADPH-dependent rearrangement and reduction of 1-deoxy-D-xylulose-5-phosphate (DXP) to 2-C-methyl-D-erythritol 4-phosphate (MEP). This is 1-deoxy-D-xylulose 5-phosphate reductoisomerase from Photobacterium profundum (strain SS9).